A 389-amino-acid polypeptide reads, in one-letter code: ATP-dependent (S)-NAD(P)H-hydrate dehydratase (389 aa).

The YjeF C-terminal domain maps to 53–389; it reads TLQLVRNIIP…RGGGRLPQAL (337 aa). A Phosphotyrosine modification is found at Tyr-85. Residues Glu-153 and 205 to 211 each bind (6S)-NADPHX; that span reads NHMEFSR. Residues 245–249 and 264–273 each bind ATP; these read KGERD and GSSRRCGGQG. Asp-274 contacts (6S)-NADPHX. Disordered regions lie at residues 316–350 and 369–389; these read KTRA…PGGC and RSLH…PQAL.

Belongs to the NnrD/CARKD family. The cofactor is Mg(2+).

It is found in the mitochondrion. It catalyses the reaction (6S)-NADHX + ATP = ADP + phosphate + NADH + H(+). The catalysed reaction is (6S)-NADPHX + ATP = ADP + phosphate + NADPH + H(+). Catalyzes the dehydration of the S-form of NAD(P)HX at the expense of ATP, which is converted to ADP. Together with NAD(P)HX epimerase, which catalyzes the epimerization of the S- and R-forms, the enzyme allows the repair of both epimers of NAD(P)HX, a damaged form of NAD(P)H that is a result of enzymatic or heat-dependent hydration. The sequence is that of ATP-dependent (S)-NAD(P)H-hydrate dehydratase from Macaca mulatta (Rhesus macaque).